A 477-amino-acid chain; its full sequence is Glycogen synthase (477 aa).

An ADP-alpha-D-glucose-binding site is contributed by K15.

It belongs to the glycosyltransferase 1 family. Bacterial/plant glycogen synthase subfamily.

The catalysed reaction is [(1-&gt;4)-alpha-D-glucosyl](n) + ADP-alpha-D-glucose = [(1-&gt;4)-alpha-D-glucosyl](n+1) + ADP + H(+). It functions in the pathway glycan biosynthesis; glycogen biosynthesis. Its function is as follows. Synthesizes alpha-1,4-glucan chains using ADP-glucose. The chain is Glycogen synthase from Glaesserella parasuis serovar 5 (strain SH0165) (Haemophilus parasuis).